A 463-amino-acid chain; its full sequence is Asparagine--tRNA ligase (463 aa).

It belongs to the class-II aminoacyl-tRNA synthetase family. In terms of assembly, homodimer.

Its subcellular location is the cytoplasm. It carries out the reaction tRNA(Asn) + L-asparagine + ATP = L-asparaginyl-tRNA(Asn) + AMP + diphosphate + H(+). This chain is Asparagine--tRNA ligase, found in Bacillus cereus (strain ATCC 10987 / NRS 248).